The sequence spans 95 residues: Integration host factor subunit beta (95 aa).

The protein belongs to the bacterial histone-like protein family. In terms of assembly, heterodimer of an alpha and a beta chain.

Its function is as follows. This protein is one of the two subunits of integration host factor, a specific DNA-binding protein that functions in genetic recombination as well as in transcriptional and translational control. The protein is Integration host factor subunit beta of Paracoccus denitrificans (strain Pd 1222).